Here is a 364-residue protein sequence, read N- to C-terminus: Chorismate synthase (364 aa).

Arg47 contacts NADP(+). Residues 124-126, Gly287, 302-306, and Arg328 each bind FMN; these read RAS and KPTAT.

Belongs to the chorismate synthase family. Homotetramer. The cofactor is FMNH2.

It catalyses the reaction 5-O-(1-carboxyvinyl)-3-phosphoshikimate = chorismate + phosphate. It participates in metabolic intermediate biosynthesis; chorismate biosynthesis; chorismate from D-erythrose 4-phosphate and phosphoenolpyruvate: step 7/7. Its function is as follows. Catalyzes the anti-1,4-elimination of the C-3 phosphate and the C-6 proR hydrogen from 5-enolpyruvylshikimate-3-phosphate (EPSP) to yield chorismate, which is the branch point compound that serves as the starting substrate for the three terminal pathways of aromatic amino acid biosynthesis. This reaction introduces a second double bond into the aromatic ring system. The sequence is that of Chorismate synthase from Prochlorococcus marinus subsp. pastoris (strain CCMP1986 / NIES-2087 / MED4).